Reading from the N-terminus, the 620-residue chain is Chaperone protein HscA homolog (620 aa).

It belongs to the heat shock protein 70 family.

In terms of biological role, chaperone involved in the maturation of iron-sulfur cluster-containing proteins. Has a low intrinsic ATPase activity which is markedly stimulated by HscB. In Shewanella woodyi (strain ATCC 51908 / MS32), this protein is Chaperone protein HscA homolog.